A 394-amino-acid chain; its full sequence is 1-deoxy-D-xylulose 5-phosphate reductoisomerase (394 aa).

The NADPH site is built by Thr-12, Gly-13, Ser-14, Ile-15, Gly-38, Asn-41, and Asn-132. Lys-133 lines the 1-deoxy-D-xylulose 5-phosphate pocket. NADPH is bound at residue Glu-134. Asp-156 contacts Mn(2+). 1-deoxy-D-xylulose 5-phosphate contacts are provided by Ser-157, Glu-158, Ser-182, and His-205. Glu-158 provides a ligand contact to Mn(2+). NADPH is bound at residue Gly-211. Ser-218, Asn-223, Lys-224, and Glu-227 together coordinate 1-deoxy-D-xylulose 5-phosphate. Glu-227 is a Mn(2+) binding site.

The protein belongs to the DXR family. It depends on Mg(2+) as a cofactor. Requires Mn(2+) as cofactor.

The enzyme catalyses 2-C-methyl-D-erythritol 4-phosphate + NADP(+) = 1-deoxy-D-xylulose 5-phosphate + NADPH + H(+). Its pathway is isoprenoid biosynthesis; isopentenyl diphosphate biosynthesis via DXP pathway; isopentenyl diphosphate from 1-deoxy-D-xylulose 5-phosphate: step 1/6. Catalyzes the NADPH-dependent rearrangement and reduction of 1-deoxy-D-xylulose-5-phosphate (DXP) to 2-C-methyl-D-erythritol 4-phosphate (MEP). The sequence is that of 1-deoxy-D-xylulose 5-phosphate reductoisomerase from Pseudarthrobacter chlorophenolicus (strain ATCC 700700 / DSM 12829 / CIP 107037 / JCM 12360 / KCTC 9906 / NCIMB 13794 / A6) (Arthrobacter chlorophenolicus).